A 612-amino-acid polypeptide reads, in one-letter code: Elongation factor 4 (612 aa).

Residues 11 to 193 (NHIRNFSIVA…KIVTDIPAPS (183 aa)) enclose the tr-type G domain. Residues 23–28 (DHGKST) and 140–143 (NKID) contribute to the GTP site.

The protein belongs to the TRAFAC class translation factor GTPase superfamily. Classic translation factor GTPase family. LepA subfamily.

The protein localises to the cell membrane. It catalyses the reaction GTP + H2O = GDP + phosphate + H(+). Its function is as follows. Required for accurate and efficient protein synthesis under certain stress conditions. May act as a fidelity factor of the translation reaction, by catalyzing a one-codon backward translocation of tRNAs on improperly translocated ribosomes. Back-translocation proceeds from a post-translocation (POST) complex to a pre-translocation (PRE) complex, thus giving elongation factor G a second chance to translocate the tRNAs correctly. Binds to ribosomes in a GTP-dependent manner. The protein is Elongation factor 4 of Lactobacillus acidophilus (strain ATCC 700396 / NCK56 / N2 / NCFM).